We begin with the raw amino-acid sequence, 366 residues long: Transmembrane protein 26 (366 aa).

Transmembrane regions (helical) follow at residues 4–24 (LVLLKALVTRLLFLLHSLVAV), 36–56 (YWLLALLNLLLVLETVLTLKF), and 64–84 (WLSPAIFVYLVNIMPSLWLLE). N110 carries N-linked (GlcNAc...) asparagine glycosylation. The next 5 membrane-spanning stretches (helical) occupy residues 138–158 (MVCEPVWTLGLHQTLLLILII), 176–196 (ELLLMFVGTAADILEFTTETL), 208–228 (VSGILVVWTWSMLQFPLDLAV), 258–278 (IGLSFFIQDGPFLVVRLVLMI), and 282–302 (VINHMLVFFAVKNSLVMALHF). Residues 319-329 (HPESPKPEHSG) show a composition bias toward basic and acidic residues. The tract at residues 319 to 366 (HPESPKPEHSGPDQPSESGPSEWEDASPEALPLRTSPVTSEESYPTTP) is disordered. Positions 354 to 366 (SPVTSEESYPTTP) are enriched in polar residues.

The protein resides in the membrane. In Mus musculus (Mouse), this protein is Transmembrane protein 26 (Tmem26).